Reading from the N-terminus, the 440-residue chain is Thymidine phosphorylase (440 aa).

Belongs to the thymidine/pyrimidine-nucleoside phosphorylase family. As to quaternary structure, homodimer.

The catalysed reaction is thymidine + phosphate = 2-deoxy-alpha-D-ribose 1-phosphate + thymine. The protein operates within pyrimidine metabolism; dTMP biosynthesis via salvage pathway; dTMP from thymine: step 1/2. In terms of biological role, the enzymes which catalyze the reversible phosphorolysis of pyrimidine nucleosides are involved in the degradation of these compounds and in their utilization as carbon and energy sources, or in the rescue of pyrimidine bases for nucleotide synthesis. The chain is Thymidine phosphorylase from Salmonella choleraesuis (strain SC-B67).